Reading from the N-terminus, the 628-residue chain is ATP-dependent zinc metalloprotease FtsH (628 aa).

At 1-7 the chain is on the stromal side; the sequence is MKLSWKT. A helical membrane pass occupies residues 8-28; that stretch reads LLLWSLPIFVIGFFFWQGFLG. Over 29-118 the chain is Lumenal; that stretch reads PTTTDVGSNI…AHPPKSTSAV (90 aa). A helical transmembrane segment spans residues 119–139; it reads WGLLGNLLFPLLLVGGLAFLF. At 140–628 the chain is on the stromal side; the sequence is RRSNNASGGP…PEKNYYISQF (489 aa). 213–220 contributes to the ATP binding site; the sequence is GPPGTGKT. H434 serves as a coordination point for Zn(2+). E435 is a catalytic residue. Zn(2+) is bound by residues H438 and D512.

The protein in the central section; belongs to the AAA ATPase family. In the C-terminal section; belongs to the peptidase M41 family. Homohexamer. Requires Zn(2+) as cofactor.

It is found in the plastid. It localises to the chloroplast thylakoid membrane. In terms of biological role, acts as a processive, ATP-dependent zinc metallopeptidase. In Pyropia yezoensis (Susabi-nori), this protein is ATP-dependent zinc metalloprotease FtsH.